Reading from the N-terminus, the 326-residue chain is uncharacterized protein (326 aa).

Solcar repeat units lie at residues 15-106 (EFLV…VRRV), 114-215 (ETHA…ATDF), and 234-322 (LKTW…SKAL). A run of 6 helical transmembrane segments spans residues 16–36 (FLVK…SVVA), 83–103 (TATL…YEQV), 120–140 (FLSG…LELI), 191–211 (FSVT…AYDL), 240–260 (LLCG…FEVC), and 294–314 (FFVG…TSFF).

The protein belongs to the mitochondrial carrier (TC 2.A.29) family.

It localises to the mitochondrion inner membrane. This is an uncharacterized protein from Schizosaccharomyces pombe (strain 972 / ATCC 24843) (Fission yeast).